The following is a 131-amino-acid chain: Glycine cleavage system H protein (131 aa).

The 83-residue stretch at Thr24–Gln106 folds into the Lipoyl-binding domain. Lys65 bears the N6-lipoyllysine mark.

The protein belongs to the GcvH family. In terms of assembly, the glycine cleavage system is composed of four proteins: P, T, L and H. Requires (R)-lipoate as cofactor.

The glycine cleavage system catalyzes the degradation of glycine. The H protein shuttles the methylamine group of glycine from the P protein to the T protein. The protein is Glycine cleavage system H protein of Mycobacterium sp. (strain JLS).